A 151-amino-acid chain; its full sequence is UPF0756 membrane protein GK2737 (151 aa).

4 consecutive transmembrane segments (helical) span residues 5-25 (VLFL…SLIV), 53-73 (WGVT…EIGF), 79-99 (SLQS…ALIA), and 121-141 (ILAV…AGIA).

This sequence belongs to the UPF0756 family.

It is found in the cell membrane. This chain is UPF0756 membrane protein GK2737, found in Geobacillus kaustophilus (strain HTA426).